The sequence spans 840 residues: Kinesin-like protein KIN-14J (840 aa).

The disordered stretch occupies residues M1–E74. A Kinesin motor domain is found at N177–I501. G260 to T267 is a binding site for ATP. A coiled-coil region spans residues K517–S594. The span at L581–R593 shows a compositional bias: basic and acidic residues. Residues L581–P617 are disordered.

It belongs to the TRAFAC class myosin-kinesin ATPase superfamily. Kinesin family. KIN-14 subfamily.

The polypeptide is Kinesin-like protein KIN-14J (Oryza sativa subsp. japonica (Rice)).